We begin with the raw amino-acid sequence, 485 residues long: MKAYVAVDIGASSGRLMLGQLEDGKLKLQEMHRFKNGFEFKNNHDRWNIDYLIDEIFKGLEKIKESGYTEVSLGIDTWAVDYVLVGKDGKKLQDPISYRDKRTSNSINELTTEVSKEYIYKKTGIQFLNFNTLYQLFEEDKELLKKTDKIMMIPDYIGYILTGKAVTEITNASTTQMLSLREGLFDKNLLEKVNVSSDQFAKLVDAGTVLGNLKEDWYSKYELPKVNVVTVATHDTASAVIGTPCEGQHWAYLSSGTWSLIGTELNIPENGAKVFKENYTNEWGAYGTYRFLKNIMGLWMAQCVKKELNDQYSFSELAELAGEVEPFEQFINVNDQRFQNPGNMIQEIQTYCRETGQKVPETPGEIMMAIYSNLALFYANEISKLDDIMGYHIDTLNIVGGGSNVALMNQLTSTIANVDVYAGPSEATAIGNILVQMITAGDVLNVYLGRRIISNSFDIKHYTPEQGKYSKVLAEYQQFLNKERG.

ATP is bound at residue 11–15 (ASSGR). Residues A79 and 234–236 (HDT) each bind substrate. D235 functions as the Proton acceptor in the catalytic mechanism. Position 257 (T257) interacts with ATP. Substrate is bound at residue N294. Q302 and G401 together coordinate ATP.

It belongs to the rhamnulokinase family. It depends on Mg(2+) as a cofactor.

It catalyses the reaction L-rhamnulose + ATP = L-rhamnulose 1-phosphate + ADP + H(+). Its pathway is carbohydrate degradation; L-rhamnose degradation; glycerone phosphate from L-rhamnose: step 2/3. Its function is as follows. Involved in the catabolism of L-rhamnose (6-deoxy-L-mannose). Catalyzes the transfer of the gamma-phosphate group from ATP to the 1-hydroxyl group of L-rhamnulose to yield L-rhamnulose 1-phosphate. The chain is Rhamnulokinase from Ligilactobacillus salivarius (strain UCC118) (Lactobacillus salivarius).